A 153-amino-acid polypeptide reads, in one-letter code: Interleukin-2 (153 aa).

An N-terminal signal peptide occupies residues 1–20 (MYKVQLLSCIALTLALLTSS). Thr-23 carries an O-linked (GalNAc...) threonine glycan. An intrachain disulfide couples Cys-78 to Cys-125. An N-linked (GlcNAc...) asparagine glycan is attached at Asn-111.

It belongs to the IL-2 family.

Its subcellular location is the secreted. Cytokine produced by activated CD4-positive helper T-cells and to a lesser extend activated CD8-positive T-cells and natural killer (NK) cells that plays pivotal roles in the immune response and tolerance. Binds to a receptor complex composed of either the high-affinity trimeric IL-2R (IL2RA/CD25, IL2RB/CD122 and IL2RG/CD132) or the low-affinity dimeric IL-2R (IL2RB and IL2RG). Interaction with the receptor leads to oligomerization and conformation changes in the IL-2R subunits resulting in downstream signaling starting with phosphorylation of JAK1 and JAK3. In turn, JAK1 and JAK3 phosphorylate the receptor to form a docking site leading to the phosphorylation of several substrates including STAT5. This process leads to activation of several pathways including STAT, phosphoinositide-3-kinase/PI3K and mitogen-activated protein kinase/MAPK pathways. Functions as a T-cell growth factor and can increase NK-cell cytolytic activity as well. Promotes strong proliferation of activated B-cells and subsequently immunoglobulin production. Plays a pivotal role in regulating the adaptive immune system by controlling the survival and proliferation of regulatory T-cells, which are required for the maintenance of immune tolerance. Moreover, participates in the differentiation and homeostasis of effector T-cell subsets, including Th1, Th2, Th17 as well as memory CD8-positive T-cells. The chain is Interleukin-2 (IL2) from Oryctolagus cuniculus (Rabbit).